We begin with the raw amino-acid sequence, 320 residues long: MQYAKISGTGSYLPANRVSNDDLAQKVDTSDEWITARTGIKFRHIAAENEKTSDLAAEAAHRALDAAGLDSGEIDLIIVATATPDMQFPSTATIVQQKLGITNGCPAFDVQAVCAGFMYALTTANAYIKSGMAKNALVIGAETFSRIVDWNDRTTCVLFGDGAGAVVLSASDTPGIIHSKLKADGNYLKLLNVPGQIACGKVSGSPYISMDGPGVFKFAVKMLSKIADDVIEEAGYTAAQIDWIVPHQANRRIIESTAKHLGLSMDKVVLTVQDHGNTSAASIPLALDTGIRSGQIKRGQNLLLEGIGGGFAWGAVLLQY.

Active-site residues include cysteine 114 and histidine 247. The interval 248 to 252 (QANRR) is ACP-binding. The active site involves asparagine 277.

Belongs to the thiolase-like superfamily. FabH family. In terms of assembly, homodimer.

The protein resides in the cytoplasm. The catalysed reaction is malonyl-[ACP] + acetyl-CoA + H(+) = 3-oxobutanoyl-[ACP] + CO2 + CoA. It functions in the pathway lipid metabolism; fatty acid biosynthesis. Catalyzes the condensation reaction of fatty acid synthesis by the addition to an acyl acceptor of two carbons from malonyl-ACP. Catalyzes the first condensation reaction which initiates fatty acid synthesis and may therefore play a role in governing the total rate of fatty acid production. Possesses both acetoacetyl-ACP synthase and acetyl transacylase activities. Its substrate specificity determines the biosynthesis of branched-chain and/or straight-chain of fatty acids. The chain is Beta-ketoacyl-[acyl-carrier-protein] synthase III from Neisseria meningitidis serogroup B (strain ATCC BAA-335 / MC58).